We begin with the raw amino-acid sequence, 142 residues long: Hemoglobin subunit alpha (142 aa).

The Globin domain maps to 2 to 142 (VLSSADKNNV…VSTVLTSKYR (141 aa)). Ser-4 bears the Phosphoserine mark. Lys-8 and Lys-12 each carry N6-succinyllysine. Lys-17 is subject to N6-acetyllysine; alternate. At Lys-17 the chain carries N6-succinyllysine; alternate. Tyr-25 is subject to Phosphotyrosine. Residue Ser-36 is modified to Phosphoserine. Lys-41 carries the post-translational modification N6-succinyllysine. Ser-50 bears the Phosphoserine mark. His-59 contributes to the O2 binding site. His-88 contributes to the heme b binding site. A Phosphoserine modification is found at Ser-103. Position 109 is a phosphothreonine (Thr-109). Position 125 is a phosphoserine (Ser-125). Residues Thr-135 and Thr-138 each carry the phosphothreonine modification. Residue Ser-139 is modified to Phosphoserine.

This sequence belongs to the globin family. Heterotetramer of two alpha chains and two beta chains. As to expression, red blood cells.

In terms of biological role, involved in oxygen transport from the lung to the various peripheral tissues. Hemopressin acts as an antagonist peptide of the cannabinoid receptor CNR1. Hemopressin-binding efficiently blocks cannabinoid receptor CNR1 and subsequent signaling. The protein is Hemoglobin subunit alpha (HBA) of Panthera leo (Lion).